Consider the following 556-residue polypeptide: Formate--tetrahydrofolate ligase (556 aa).

64–71 (TPAGEGKT) contributes to the ATP binding site.

Belongs to the formate--tetrahydrofolate ligase family.

The enzyme catalyses (6S)-5,6,7,8-tetrahydrofolate + formate + ATP = (6R)-10-formyltetrahydrofolate + ADP + phosphate. It functions in the pathway one-carbon metabolism; tetrahydrofolate interconversion. The chain is Formate--tetrahydrofolate ligase from Haemophilus ducreyi (strain 35000HP / ATCC 700724).